The chain runs to 383 residues: Transcription termination factor Rho (383 aa).

The disordered stretch occupies residues 1–22 (MTIETTTKKRPRAARPPRPRES). A compositionally biased stretch (basic residues) spans 8 to 17 (KKRPRAARPP). Positions 26–93 (LETVAGLLDV…AEVESVNGST (68 aa)) constitute a Rho RNA-BD domain. Residues 132–137 (GKGQRG), 144–149 (KAGKTM), and Arg175 contribute to the ATP site.

The protein belongs to the Rho family. In terms of assembly, homohexamer. The homohexamer assembles into an open ring structure.

Its function is as follows. Facilitates transcription termination by a mechanism that involves Rho binding to the nascent RNA, activation of Rho's RNA-dependent ATPase activity, and release of the mRNA from the DNA template. The chain is Transcription termination factor Rho from Streptosporangium roseum (strain ATCC 12428 / DSM 43021 / JCM 3005 / KCTC 9067 / NCIMB 10171 / NRRL 2505 / NI 9100).